The primary structure comprises 283 residues: Isochorismatase domain-containing protein 1 (283 aa).

The protein belongs to the isochorismatase family.

The sequence is that of Isochorismatase domain-containing protein 1 (isoc1) from Danio rerio (Zebrafish).